The primary structure comprises 264 residues: Virulence plasmid ParA family protein pGP5-D (264 aa).

9–16 (FKGGTGKT) serves as a coordination point for ATP.

The protein belongs to the ParA family.

In terms of biological role, required for growth within mammalian cells. The polypeptide is Virulence plasmid ParA family protein pGP5-D (Chlamydia trachomatis).